We begin with the raw amino-acid sequence, 201 residues long: Superoxide dismutase [Mn] (201 aa).

Mn(2+) contacts are provided by H27, H81, D163, and H167.

The protein belongs to the iron/manganese superoxide dismutase family. In terms of assembly, homodimer. The cofactor is Mn(2+).

Its subcellular location is the secreted. The catalysed reaction is 2 superoxide + 2 H(+) = H2O2 + O2. In terms of biological role, destroys superoxide anion radicals which are normally produced within the cells and which are toxic to biological systems. This Streptococcus pyogenes serotype M6 (strain ATCC BAA-946 / MGAS10394) protein is Superoxide dismutase [Mn] (sodA).